We begin with the raw amino-acid sequence, 370 residues long: Dual-specificity RNA methyltransferase RlmN (370 aa).

Glu93 serves as the catalytic Proton acceptor. Residues 99–337 (EEGRGTLCVS…VTTVRKTRGD (239 aa)) form the Radical SAM core domain. The cysteines at positions 106 and 343 are disulfide-linked. [4Fe-4S] cluster contacts are provided by Cys113, Cys117, and Cys120. S-adenosyl-L-methionine-binding positions include 167–168 (GE), Ser199, 221–223 (SLH), and Asn300. The active-site S-methylcysteine intermediate is the Cys343.

It belongs to the radical SAM superfamily. RlmN family. It depends on [4Fe-4S] cluster as a cofactor.

Its subcellular location is the cytoplasm. It catalyses the reaction adenosine(2503) in 23S rRNA + 2 reduced [2Fe-2S]-[ferredoxin] + 2 S-adenosyl-L-methionine = 2-methyladenosine(2503) in 23S rRNA + 5'-deoxyadenosine + L-methionine + 2 oxidized [2Fe-2S]-[ferredoxin] + S-adenosyl-L-homocysteine. The catalysed reaction is adenosine(37) in tRNA + 2 reduced [2Fe-2S]-[ferredoxin] + 2 S-adenosyl-L-methionine = 2-methyladenosine(37) in tRNA + 5'-deoxyadenosine + L-methionine + 2 oxidized [2Fe-2S]-[ferredoxin] + S-adenosyl-L-homocysteine. Specifically methylates position 2 of adenine 2503 in 23S rRNA and position 2 of adenine 37 in tRNAs. m2A2503 modification seems to play a crucial role in the proofreading step occurring at the peptidyl transferase center and thus would serve to optimize ribosomal fidelity. This Francisella tularensis subsp. holarctica (strain FTNF002-00 / FTA) protein is Dual-specificity RNA methyltransferase RlmN.